Reading from the N-terminus, the 372-residue chain is N-methyl-L-tryptophan oxidase (372 aa).

4 to 34 (DLIIIGSGSVGAAAGYYATRAGLNVLMTDAH) serves as a coordination point for FAD. Position 308 is an S-8alpha-FAD cysteine (Cys-308).

The protein belongs to the MSOX/MTOX family. MTOX subfamily. Monomer. FAD serves as cofactor.

The enzyme catalyses N(alpha)-methyl-L-tryptophan + O2 + H2O = L-tryptophan + formaldehyde + H2O2. Its function is as follows. Catalyzes the oxidative demethylation of N-methyl-L-tryptophan. The polypeptide is N-methyl-L-tryptophan oxidase (Shigella dysenteriae serotype 1 (strain Sd197)).